A 196-amino-acid polypeptide reads, in one-letter code: MVKIGVLGLQGAVREHVKSVEASGAEAVVVKRIEQLEEIDGLILPGGESTTMRRLIDKYAFMEPLRTFAKSGKPMFGTCAGMILLAKTLIGYDEAHIGAMDITVERNAFGRQKDSFEAALSIKGVGEDFVGVFIRAPYVVNVADNVEVLSTHGDRMVAVRQGPFLAASFHPELTDDHRVTAYFVEMVKEAKMKKVV.

Residue 47–49 coordinates L-glutamine; it reads GES. Cysteine 79 functions as the Nucleophile in the catalytic mechanism. Residues arginine 106 and 134-135 each bind L-glutamine; that span reads IR. Catalysis depends on charge relay system residues histidine 170 and glutamate 172.

It belongs to the glutaminase PdxT/SNO family. In the presence of PdxS, forms a dodecamer of heterodimers. Only shows activity in the heterodimer.

The enzyme catalyses aldehydo-D-ribose 5-phosphate + D-glyceraldehyde 3-phosphate + L-glutamine = pyridoxal 5'-phosphate + L-glutamate + phosphate + 3 H2O + H(+). The catalysed reaction is L-glutamine + H2O = L-glutamate + NH4(+). It functions in the pathway cofactor biosynthesis; pyridoxal 5'-phosphate biosynthesis. In terms of biological role, catalyzes the hydrolysis of glutamine to glutamate and ammonia as part of the biosynthesis of pyridoxal 5'-phosphate. The resulting ammonia molecule is channeled to the active site of PdxS. This chain is Pyridoxal 5'-phosphate synthase subunit PdxT, found in Bacillus cereus (strain Q1).